The chain runs to 485 residues: E-selectin (485 aa).

Positions 1–22 are cleaved as a signal peptide; that stretch reads MIVSQYLSALTFVLLLFKESRT. Residues 23 to 140 enclose the C-type lectin domain; that stretch reads WSYHASTEMM…CTKQKLALCY (118 aa). Over 23–430 the chain is Extracellular; it reads WSYHASTEMM…CEAPTVSQTP (408 aa). 15 disulfide bridges follow: Cys-41-Cys-139, Cys-112-Cys-131, Cys-144-Cys-155, Cys-149-Cys-164, Cys-166-Cys-175, Cys-181-Cys-224, Cys-194-Cys-206, Cys-210-Cys-237, Cys-242-Cys-286, Cys-255-Cys-268, Cys-272-Cys-299, Cys-304-Cys-349, Cys-335-Cys-362, Cys-367-Cys-408, and Cys-394-Cys-421. N-linked (GlcNAc...) asparagine glycosylation is found at Asn-61, Asn-79, and Asn-88. Ca(2+) is bound by residues Glu-102, Asn-104, and Glu-110. A carbohydrate-binding positions include 102 to 110, 114 to 119, and 127 to 129; these read EPNNKQSDE, EIYIKR, and NDE. The Ca(2+) site is built by Asn-127 and Asp-128. Residues 141-176 enclose the EGF-like domain; sequence KAACNPTPCGSHGECVETINNYTCQCHPGFKGLKCE. The N-linked (GlcNAc...) asparagine glycan is linked to Asn-161. 4 consecutive Sushi domains span residues 179–239, 240–301, 302–364, and 365–423; these read VTCP…KCNV, VKCD…TCKA, VSCA…VCEV, and VRCS…TCEA. N-linked (GlcNAc...) asparagine glycosylation occurs at Asn-203. Residue Asn-265 is glycosylated (N-linked (GlcNAc...) asparagine). N-linked (GlcNAc...) asparagine glycosylation is found at Asn-312 and Asn-316. Asn-379 and Asn-401 each carry an N-linked (GlcNAc...) asparagine glycan. Residues 431–453 form a helical membrane-spanning segment; the sequence is LAVGLSTAGVSLVTIPSFLFWLL. Residues 454 to 485 are Cytoplasmic-facing; it reads KRLQKKAKKFSPASSCSSLKSNGCYSTPSKLI. The segment at 466–485 is disordered; sequence ASSCSSLKSNGCYSTPSKLI.

The protein belongs to the selectin/LECAM family. As to quaternary structure, interacts with SELPLG/PSGL1 and PODXL2 through the sialyl Lewis X epitope. SELPLG sulfation appears not to be required for this interaction.

Its subcellular location is the cell membrane. Its function is as follows. Cell-surface glycoprotein having a role in immunoadhesion. Mediates in the adhesion of blood neutrophils in cytokine-activated endothelium through interaction with SELPLG/PSGL1. May have a role in capillary morphogenesis. The sequence is that of E-selectin (SELE) from Bos taurus (Bovine).